The following is a 438-amino-acid chain: Methylenetetrahydrofolate--tRNA-(uracil-5-)-methyltransferase TrmFO (438 aa).

9–14 (GGGLAG) is a binding site for FAD.

Belongs to the MnmG family. TrmFO subfamily. Requires FAD as cofactor.

It localises to the cytoplasm. It carries out the reaction uridine(54) in tRNA + (6R)-5,10-methylene-5,6,7,8-tetrahydrofolate + NADH + H(+) = 5-methyluridine(54) in tRNA + (6S)-5,6,7,8-tetrahydrofolate + NAD(+). The catalysed reaction is uridine(54) in tRNA + (6R)-5,10-methylene-5,6,7,8-tetrahydrofolate + NADPH + H(+) = 5-methyluridine(54) in tRNA + (6S)-5,6,7,8-tetrahydrofolate + NADP(+). Functionally, catalyzes the folate-dependent formation of 5-methyl-uridine at position 54 (M-5-U54) in all tRNAs. The chain is Methylenetetrahydrofolate--tRNA-(uracil-5-)-methyltransferase TrmFO from Lactobacillus johnsonii (strain CNCM I-12250 / La1 / NCC 533).